The sequence spans 301 residues: Mitochondrial carnitine/acylcarnitine carrier protein (301 aa).

Ala2 is subject to N-acetylalanine. Over Ala2 to Lys12 the chain is Cytoplasmic. Solcar repeat units follow at residues Ile8–Leu99, Leu108–Ile196, and Leu207–Phe293. A helical transmembrane segment spans residues Asn13–Leu31. Residues Asp32–Arg73 lie on the Mitochondrial matrix side of the membrane. Residues Gly74–Phe93 form a helical membrane-spanning segment. At Gly94–Gln112 the chain is on the cytoplasmic side. A helical membrane pass occupies residues Leu113–Gly131. Over Glu132 to Lys170 the chain is Mitochondrial matrix. Residues Lys148 and Lys157 each carry the N6-acetyllysine modification. Lys170 is subject to N6-acetyllysine; alternate. N6-succinyllysine; alternate is present on Lys170. Residues Gly171–Tyr190 form a helical membrane-spanning segment. The Cytoplasmic segment spans residues Glu191–Arg211. The chain crosses the membrane as a helical span at residues Val212–Pro230. Residues Asp231–Lys267 lie on the Mitochondrial matrix side of the membrane. A helical transmembrane segment spans residues Gly268 to Phe287. Residues Glu288–Leu301 are Cytoplasmic-facing.

The protein belongs to the mitochondrial carrier (TC 2.A.29) family.

Its subcellular location is the mitochondrion inner membrane. It catalyses the reaction O-acetyl-(R)-carnitine(in) + (R)-carnitine(out) = O-acetyl-(R)-carnitine(out) + (R)-carnitine(in). It carries out the reaction an O-acyl-(R)-carnitine(in) + (R)-carnitine(out) = an O-acyl-(R)-carnitine(out) + (R)-carnitine(in). The catalysed reaction is O-propanoyl-(R)-carnitine(in) + (R)-carnitine(out) = O-propanoyl-(R)-carnitine(out) + (R)-carnitine(in). The enzyme catalyses O-hexadecanoyl-(R)-carnitine(in) + (R)-carnitine(out) = O-hexadecanoyl-(R)-carnitine(out) + (R)-carnitine(in). It catalyses the reaction O-octanoyl-(R)-carnitine(in) + (R)-carnitine(out) = O-octanoyl-(R)-carnitine(out) + (R)-carnitine(in). It carries out the reaction (R)-carnitine(in) = (R)-carnitine(out). Mediates the electroneutral exchange of acylcarnitines (O-acyl-(R)-carnitine or L-acylcarnitine) of different acyl chain lengths (ranging from O-acetyl-(R)-carnitine to long-chain O-acyl-(R)-carnitines) with free carnitine ((R)-carnitine or L-carnitine) across the mitochondrial inner membrane, via a ping-pong mechanism. Key player in the mitochondrial oxidation pathway, it translocates the fatty acids in the form of acylcarnitines into the mitochondrial matrix, where the carnitine palmitoyltransferase 2 (CPT-2) activates them to undergo fatty acid beta-oxidation. Catalyzes the unidirectional transport (uniport) of carnitine at lower rates than the antiport (exchange). The polypeptide is Mitochondrial carnitine/acylcarnitine carrier protein (SLC25A20) (Macaca fascicularis (Crab-eating macaque)).